The following is a 475-amino-acid chain: Ataxin-10 (475 aa).

Arg-10 is subject to Omega-N-methylarginine. Phosphoserine occurs at positions 12 and 77. Thr-82 carries the phosphothreonine modification. Ser-430 is subject to Phosphoserine.

The protein belongs to the ataxin-10 family. Homooligomer. Interacts with GNB2. Interacts with IQCB1. Interacts with OGT. Interacts with PLK1. In terms of processing, polyubiquitinated. Post-translationally, phosphorylation at Ser-12 by AURKB promotes the association of ATXN10 with PLK1. Phosphorylation at Ser-77 and Thr-82 by PLK1 may play a role in the regulation of cytokinesis and may stimulate the proteasome-mediated degradation of ATXN10. In terms of tissue distribution, in high cell density areas; cerebellar cortex, dentate gyrus, hippocampus, anterior olfactory nucleus, primary olfactory cortex.

The protein resides in the cytoplasm. It is found in the perinuclear region. The protein localises to the midbody. It localises to the cytoskeleton. Its subcellular location is the cilium basal body. The protein resides in the microtubule organizing center. It is found in the centrosome. The protein localises to the centriole. Its function is as follows. May play a role in the regulation of cytokinesis. May play a role in signaling by stimulating protein glycosylation. Induces neuritogenesis by activating the Ras-MAP kinase pathway and is necessary for the survival of cerebellar neurons. Does not appear to play a major role in ciliogenesis. This is Ataxin-10 (Atxn10) from Mus musculus (Mouse).